We begin with the raw amino-acid sequence, 349 residues long: Dihydroorotate dehydrogenase (quinone) (349 aa).

FMN contacts are provided by residues 67–71 (AGLDK) and threonine 91. Lysine 71 is a binding site for substrate. Residue 116–120 (NRLGF) coordinates substrate. Positions 147 and 180 each coordinate FMN. Asparagine 180 is a substrate binding site. Serine 183 serves as the catalytic Nucleophile. Asparagine 185 contributes to the substrate binding site. FMN contacts are provided by lysine 225 and threonine 253. 254-255 (NT) contributes to the substrate binding site. FMN contacts are provided by residues glycine 276, glycine 305, and 326-327 (YT).

This sequence belongs to the dihydroorotate dehydrogenase family. Type 2 subfamily. Monomer. FMN is required as a cofactor.

The protein resides in the cell membrane. The enzyme catalyses (S)-dihydroorotate + a quinone = orotate + a quinol. It functions in the pathway pyrimidine metabolism; UMP biosynthesis via de novo pathway; orotate from (S)-dihydroorotate (quinone route): step 1/1. Catalyzes the conversion of dihydroorotate to orotate with quinone as electron acceptor. The sequence is that of Dihydroorotate dehydrogenase (quinone) from Bordetella avium (strain 197N).